Reading from the N-terminus, the 129-residue chain is Procyclic form-specific polypeptide A-beta (129 aa).

An N-terminal signal peptide occupies residues 1–27 (MAPRSLYLLAVLLFSANLFAGVGFAAA). A disordered region spans residues 27–111 (AAEGPEDKGL…PEPEPGAATL (85 aa)). Acidic residues predominate over residues 53–104 (DDTNGTDPDPEPEPEPEPEPEPEPEPEPEPEPEPEPEPEPEPEPEPEPEPEP). An N-linked (GlcNAc...) asparagine glycan is attached at N56. 24 tandem repeats follow at residues 59-60 (DP), 61-62 (DP), 63-64 (EP), 65-66 (EP), 67-68 (EP), 69-70 (EP), 71-72 (EP), 73-74 (EP), 75-76 (EP), 77-78 (EP), 79-80 (EP), 81-82 (EP), 83-84 (EP), 85-86 (EP), 87-88 (EP), 89-90 (EP), 91-92 (EP), 93-94 (EP), 95-96 (EP), 97-98 (EP), 99-100 (EP), 101-102 (EP), 103-104 (EP), and 105-106 (EP). A 24 X 2 AA tandem repeats of [DE]-P region spans residues 59–106 (DPDPEPEPEPEPEPEPEPEPEPEPEPEPEPEPEPEPEPEPEPEPEPEP). Residue G107 is the site of GPI-anchor amidated glycine attachment. The propeptide occupies 108 to 129 (AATLKSVALPFAIAAVGLVAAF).

The protein localises to the cell membrane. In terms of biological role, major surface antigen of procyclic forms. This Trypanosoma brucei brucei protein is Procyclic form-specific polypeptide A-beta (PARPA-BETA).